Consider the following 141-residue polypeptide: Hemoglobin subunit alpha (141 aa).

The Globin domain maps to 1-141; sequence VLSAADKAHV…VSTVLTSKYR (141 aa). S3 carries the phosphoserine modification. N6-succinyllysine occurs at positions 7 and 11. At K16 the chain carries N6-acetyllysine; alternate. K16 is subject to N6-succinyllysine; alternate. A Phosphotyrosine modification is found at Y24. The residue at position 35 (S35) is a Phosphoserine. K40 is modified (N6-succinyllysine). A Phosphoserine modification is found at S49. Position 58 (H58) interacts with O2. H87 serves as a coordination point for heme b. A Phosphothreonine modification is found at T108. S124 carries the post-translational modification Phosphoserine. T134 and T137 each carry phosphothreonine. At S138 the chain carries Phosphoserine.

This sequence belongs to the globin family. Heterotetramer of two alpha chains and two beta chains. In terms of tissue distribution, red blood cells.

In terms of biological role, involved in oxygen transport from the lung to the various peripheral tissues. Its function is as follows. Hemopressin acts as an antagonist peptide of the cannabinoid receptor CNR1. Hemopressin-binding efficiently blocks cannabinoid receptor CNR1 and subsequent signaling. The sequence is that of Hemoglobin subunit alpha (HBA) from Bradypus tridactylus (Pale-throated three-toed sloth).